A 122-amino-acid polypeptide reads, in one-letter code: S-adenosylmethionine decarboxylase proenzyme (122 aa).

The active-site Schiff-base intermediate with substrate; via pyruvic acid is Ser69. Ser69 is modified (pyruvic acid (Ser); by autocatalysis). The active-site Proton acceptor; for processing activity is His74. Cys89 serves as the catalytic Proton donor; for catalytic activity.

This sequence belongs to the prokaryotic AdoMetDC family. Type 1 subfamily. In terms of assembly, heterotetramer of two alpha and two beta chains arranged as a dimer of alpha/beta heterodimers. Requires pyruvate as cofactor. Post-translationally, is synthesized initially as an inactive proenzyme. Formation of the active enzyme involves a self-maturation process in which the active site pyruvoyl group is generated from an internal serine residue via an autocatalytic post-translational modification. Two non-identical subunits are generated from the proenzyme in this reaction, and the pyruvate is formed at the N-terminus of the alpha chain, which is derived from the carboxyl end of the proenzyme. The post-translation cleavage follows an unusual pathway, termed non-hydrolytic serinolysis, in which the side chain hydroxyl group of the serine supplies its oxygen atom to form the C-terminus of the beta chain, while the remainder of the serine residue undergoes an oxidative deamination to produce ammonia and the pyruvoyl group blocking the N-terminus of the alpha chain.

It catalyses the reaction S-adenosyl-L-methionine + H(+) = S-adenosyl 3-(methylsulfanyl)propylamine + CO2. The protein operates within amine and polyamine biosynthesis; S-adenosylmethioninamine biosynthesis; S-adenosylmethioninamine from S-adenosyl-L-methionine: step 1/1. In terms of biological role, catalyzes the decarboxylation of S-adenosylmethionine to S-adenosylmethioninamine (dcAdoMet), the propylamine donor required for the synthesis of the polyamines spermine and spermidine from the diamine putrescine. This is S-adenosylmethionine decarboxylase proenzyme from Saccharolobus islandicus (strain L.S.2.15 / Lassen #1) (Sulfolobus islandicus).